Here is a 340-residue protein sequence, read N- to C-terminus: Phosphoribosylformylglycinamidine cyclo-ligase (340 aa).

This sequence belongs to the AIR synthase family.

The protein resides in the cytoplasm. It catalyses the reaction 2-formamido-N(1)-(5-O-phospho-beta-D-ribosyl)acetamidine + ATP = 5-amino-1-(5-phospho-beta-D-ribosyl)imidazole + ADP + phosphate + H(+). Its pathway is purine metabolism; IMP biosynthesis via de novo pathway; 5-amino-1-(5-phospho-D-ribosyl)imidazole from N(2)-formyl-N(1)-(5-phospho-D-ribosyl)glycinamide: step 2/2. This Streptococcus pyogenes serotype M12 (strain MGAS2096) protein is Phosphoribosylformylglycinamidine cyclo-ligase.